Reading from the N-terminus, the 252-residue chain is Thiamine thiazole synthase (252 aa).

Residues Ser-35, 54–55 (EK), Gly-62, Val-126, and 152–154 (HVD) contribute to the NAD(+) site. Positions 154 and 169 each coordinate Fe cation. Met-217 contacts NAD(+). Position 227 (Arg-227) interacts with glycine.

Belongs to the THI4 family. As to quaternary structure, homooctamer; tetramer of dimers. Requires Fe(2+) as cofactor.

It catalyses the reaction hydrogen sulfide + glycine + NAD(+) = ADP-5-ethyl-4-methylthiazole-2-carboxylate + nicotinamide + 3 H2O + H(+). It participates in cofactor biosynthesis; thiamine diphosphate biosynthesis. Functionally, involved in the biosynthesis of the thiazole moiety of thiamine. Catalyzes the conversion of NAD and glycine to adenosine diphosphate 5-(2-hydroxyethyl)-4-methylthiazole-2-carboxylate (ADT), an adenylated thiazole intermediate, using free sulfide as a source of sulfur. This is Thiamine thiazole synthase from Pyrococcus furiosus (strain ATCC 43587 / DSM 3638 / JCM 8422 / Vc1).